The following is a 164-amino-acid chain: Ecotin (164 aa).

Positions 1-20 (MKMFVPAVVFAALASASAWA) are cleaved as a signal peptide. The cysteines at positions 72 and 109 are disulfide-linked.

The protein belongs to the protease inhibitor I11 (ecotin) family. As to quaternary structure, homodimer.

The protein resides in the periplasm. Functionally, general inhibitor of pancreatic serine proteases: inhibits chymotrypsin, trypsin, elastases, factor X, kallikrein as well as a variety of other proteases. In Salmonella typhi, this protein is Ecotin.